We begin with the raw amino-acid sequence, 400 residues long: Bifunctional enzyme IspD/IspF (400 aa).

The 2-C-methyl-D-erythritol 4-phosphate cytidylyltransferase stretch occupies residues 1–235 (MSLWTVLLAA…LAEAAAPPVP (235 aa)). A 2-C-methyl-D-erythritol 2,4-cyclodiphosphate synthase region spans residues 236–400 (VTGYGYDVHR…VALVSGWRRP (165 aa)). Residues D242 and H244 each coordinate a divalent metal cation. Residues 242–244 (DVH) and 276–277 (HS) contribute to the 4-CDP-2-C-methyl-D-erythritol 2-phosphate site. Position 284 (H284) interacts with a divalent metal cation. Residues 298 to 300 (DIG), 303 to 307 (FPDSN), 374 to 377 (TTEE), and F381 contribute to the 4-CDP-2-C-methyl-D-erythritol 2-phosphate site.

This sequence in the N-terminal section; belongs to the IspD/TarI cytidylyltransferase family. IspD subfamily. In the C-terminal section; belongs to the IspF family. It depends on a divalent metal cation as a cofactor.

The enzyme catalyses 2-C-methyl-D-erythritol 4-phosphate + CTP + H(+) = 4-CDP-2-C-methyl-D-erythritol + diphosphate. It catalyses the reaction 4-CDP-2-C-methyl-D-erythritol 2-phosphate = 2-C-methyl-D-erythritol 2,4-cyclic diphosphate + CMP. It participates in isoprenoid biosynthesis; isopentenyl diphosphate biosynthesis via DXP pathway; isopentenyl diphosphate from 1-deoxy-D-xylulose 5-phosphate: step 2/6. It functions in the pathway isoprenoid biosynthesis; isopentenyl diphosphate biosynthesis via DXP pathway; isopentenyl diphosphate from 1-deoxy-D-xylulose 5-phosphate: step 4/6. Functionally, bifunctional enzyme that catalyzes the formation of 4-diphosphocytidyl-2-C-methyl-D-erythritol from CTP and 2-C-methyl-D-erythritol 4-phosphate (MEP) (IspD), and catalyzes the conversion of 4-diphosphocytidyl-2-C-methyl-D-erythritol 2-phosphate (CDP-ME2P) to 2-C-methyl-D-erythritol 2,4-cyclodiphosphate (ME-CPP) with a corresponding release of cytidine 5-monophosphate (CMP) (IspF). This is Bifunctional enzyme IspD/IspF from Solidesulfovibrio magneticus (strain ATCC 700980 / DSM 13731 / RS-1) (Desulfovibrio magneticus).